The following is a 239-amino-acid chain: Purine nucleoside phosphorylase DeoD-type (239 aa).

A purine D-ribonucleoside is bound at residue H5. The phosphate site is built by G21 and R25. The residue at position 27 (K27) is an N6-acetyllysine. Phosphate contacts are provided by residues R44 and 88-91 (RVGS). Residues 180-182 (EME) and 204-205 (SD) contribute to the a purine D-ribonucleoside site. D205 functions as the Proton donor in the catalytic mechanism.

This sequence belongs to the PNP/UDP phosphorylase family. Homohexamer; trimer of homodimers.

It catalyses the reaction a purine D-ribonucleoside + phosphate = a purine nucleobase + alpha-D-ribose 1-phosphate. It carries out the reaction a purine 2'-deoxy-D-ribonucleoside + phosphate = a purine nucleobase + 2-deoxy-alpha-D-ribose 1-phosphate. In terms of biological role, catalyzes the reversible phosphorolytic breakdown of the N-glycosidic bond in the beta-(deoxy)ribonucleoside molecules, with the formation of the corresponding free purine bases and pentose-1-phosphate. This chain is Purine nucleoside phosphorylase DeoD-type, found in Escherichia coli O8 (strain IAI1).